The chain runs to 134 residues: Small ribosomal subunit protein uS11 (134 aa).

Disordered stretches follow at residues 1–22 (MPPK…KNVA) and 114–134 (SIQD…RRRV). The segment covering 9-22 (AAKKVRRKEKKNVA) has biased composition (basic residues).

It belongs to the universal ribosomal protein uS11 family. As to quaternary structure, part of the 30S ribosomal subunit. Interacts with proteins S7 and S18. Binds to IF-3.

Functionally, located on the platform of the 30S subunit, it bridges several disparate RNA helices of the 16S rRNA. Forms part of the Shine-Dalgarno cleft in the 70S ribosome. This chain is Small ribosomal subunit protein uS11, found in Streptomyces avermitilis (strain ATCC 31267 / DSM 46492 / JCM 5070 / NBRC 14893 / NCIMB 12804 / NRRL 8165 / MA-4680).